A 360-amino-acid polypeptide reads, in one-letter code: Histidinol-phosphate aminotransferase (360 aa).

Lysine 221 is subject to N6-(pyridoxal phosphate)lysine.

Belongs to the class-II pyridoxal-phosphate-dependent aminotransferase family. Histidinol-phosphate aminotransferase subfamily. In terms of assembly, homodimer. It depends on pyridoxal 5'-phosphate as a cofactor.

It catalyses the reaction L-histidinol phosphate + 2-oxoglutarate = 3-(imidazol-4-yl)-2-oxopropyl phosphate + L-glutamate. It functions in the pathway amino-acid biosynthesis; L-histidine biosynthesis; L-histidine from 5-phospho-alpha-D-ribose 1-diphosphate: step 7/9. The chain is Histidinol-phosphate aminotransferase from Desulfitobacterium hafniense (strain Y51).